The primary structure comprises 149 residues: NADH-quinone oxidoreductase subunit A (149 aa).

3 helical membrane-spanning segments follow: residues 16 to 36 (FAVF…GAFF), 68 to 88 (FYLV…LYAW), and 98 to 118 (LGFI…FYLV).

This sequence belongs to the complex I subunit 3 family. As to quaternary structure, NDH-1 is composed of 13 different subunits. Subunits NuoA, H, J, K, L, M, N constitute the membrane sector of the complex.

It localises to the cell inner membrane. It catalyses the reaction a quinone + NADH + 5 H(+)(in) = a quinol + NAD(+) + 4 H(+)(out). Functionally, NDH-1 shuttles electrons from NADH, via FMN and iron-sulfur (Fe-S) centers, to quinones in the respiratory chain. The immediate electron acceptor for the enzyme in this species is believed to be ubiquinone. Couples the redox reaction to proton translocation (for every two electrons transferred, four hydrogen ions are translocated across the cytoplasmic membrane), and thus conserves the redox energy in a proton gradient. This is NADH-quinone oxidoreductase subunit A from Photorhabdus laumondii subsp. laumondii (strain DSM 15139 / CIP 105565 / TT01) (Photorhabdus luminescens subsp. laumondii).